A 94-amino-acid chain; its full sequence is U27-theraphotoxin-Cg1a (94 aa).

A signal peptide spans 1 to 22 (MIFLLPPVIFVMLLAESVLILG). A propeptide spanning residues 23–58 (DSEDADLMEMVQMSRPFFNPIIPAVEFVDLREERQR) is cleaved from the precursor. Cystine bridges form between cysteine 60–cysteine 78, cysteine 67–cysteine 83, and cysteine 77–cysteine 88.

The protein belongs to the neurotoxin 14 (magi-1) family. OAIP-1 subfamily. Expressed by the venom gland.

It localises to the secreted. Its function is as follows. Probable ion channel inhibitor. This chain is U27-theraphotoxin-Cg1a, found in Chilobrachys guangxiensis (Chinese earth tiger tarantula).